A 608-amino-acid polypeptide reads, in one-letter code: Mitochondrial import receptor subunit TOM70 (608 aa).

A2 carries the post-translational modification N-acetylalanine. The Mitochondrial intermembrane portion of the chain corresponds to 2 to 38; the sequence is AASKPVEAAVVAAAVPSSGSGVGGGGTAGPGTGGLPR. A helical transmembrane segment spans residues 39–59; that stretch reads WQLALAVGAPLLLGAGAIYLW. The Cytoplasmic portion of the chain corresponds to 60–608; it reads SRQQRRREAR…KKYGLKPPTL (549 aa). The tract at residues 67-107 is disordered; that stretch reads EARGRGDASGLKRNSERKTPEGRASPAPGSGHPEGPGAHLD. Position 71 is an omega-N-methylarginine (R71). 3 positions are modified to phosphoserine: S91, S96, and S110. 2 TPR repeats span residues 114–147 and 153–186; these read AQAA…CPTE and STFY…NPKY. At K185 the chain carries N6-acetyllysine. A Glycyl lysine isopeptide (Lys-Gly) (interchain with G-Cter in SUMO2) cross-link involves residue K275. TPR repeat units lie at residues 294-327, 329-362, 367-400, 401-434, 440-475, 476-509, 511-544, and 545-578; these read ENSG…EGKY, AEAL…KEAN, ANAL…DPQN, ADVY…RPES, QKCF…FPRC, AEGY…EPDN, TTYV…DNKC, and DFAY…AKSE. S434 carries the phosphoserine modification.

Belongs to the Tom70 family. In terms of assembly, forms part of the preprotein translocase complex of the outer mitochondrial membrane (TOM complex) which consists of at least 7 different proteins (TOMM5, TOMM6, TOMM7, TOMM20, TOMM22, TOMM40 and TOMM70). Interacts with CAPN8. Interacts with TRADD, TRAF6 and STING. Interacts with MAVS; the interaction is enhanced by Sendai virus infection. Interacts with HSPA8 and HSP90AA1; both interactions are required for preprotein mitochondrial import. The interaction with HSP90AA1 is direct and mediates the association of TOMM70 with IRF3 and TBK1. Upon mitochondrial depolarization, interacts with PINK1; the interaction is required for PINK1-TOM-TIM23 supercomplex formation which is critical for PINK1 stabilization at the outer mitochondrial membrane, kinase activation and downstream mitophagy. As to quaternary structure, (Microbial infection) Interacts (via C-terminus) with SARS coronaviru/SARS-CoV and SARS coronavirus-2/SARS-CoV-2 virus protein ORF9b. (Microbial infection) Interacts with parasite T.gondii RH strain MAF1b1; the interaction impairs TOMM70 import activity, enables the parasite to associate with the host mitochondria and facilitates the association of MAF1b1 with MIB complex component SAMM50, promoting the formation of SPOTs (structures positive for outer mitochondrial membrane (OMM)); the interaction is probably indirect.

Its subcellular location is the mitochondrion outer membrane. In terms of biological role, acts as a receptor of the preprotein translocase complex of the outer mitochondrial membrane (TOM complex). Recognizes and mediates the translocation of mitochondrial preproteins from the cytosol into the mitochondria in a chaperone dependent manner. Mediates TBK1 and IRF3 activation induced by MAVS in response to Sendai virus infection and promotes host antiviral responses during virus infection. Upon Sendai virus infection, recruits HSP90AA1:IRF3:BAX in mitochondrion and the complex induces apoptosis. The chain is Mitochondrial import receptor subunit TOM70 from Homo sapiens (Human).